The primary structure comprises 553 residues: Hydroxylamine reductase (553 aa).

[2Fe-2S] cluster is bound by residues Cys-3, Cys-6, Cys-18, and Cys-25. Residues His-252, Glu-276, Cys-320, Cys-408, Cys-436, Cys-461, Glu-495, and Lys-497 each contribute to the hybrid [4Fe-2O-2S] cluster site. At Cys-408 the chain carries Cysteine persulfide.

Belongs to the HCP family. The cofactor is [2Fe-2S] cluster. Requires hybrid [4Fe-2O-2S] cluster as cofactor.

The protein localises to the cytoplasm. The enzyme catalyses A + NH4(+) + H2O = hydroxylamine + AH2 + H(+). Its function is as follows. Catalyzes the reduction of hydroxylamine to form NH(3) and H(2)O. The chain is Hydroxylamine reductase from Vibrio parahaemolyticus serotype O3:K6 (strain RIMD 2210633).